The sequence spans 298 residues: Acetylglutamate kinase (298 aa).

Substrate contacts are provided by residues 69–70 (GG), Arg-91, and Asn-196.

The protein belongs to the acetylglutamate kinase family. ArgB subfamily.

It is found in the cytoplasm. The catalysed reaction is N-acetyl-L-glutamate + ATP = N-acetyl-L-glutamyl 5-phosphate + ADP. Its pathway is amino-acid biosynthesis; L-arginine biosynthesis; N(2)-acetyl-L-ornithine from L-glutamate: step 2/4. In terms of biological role, catalyzes the ATP-dependent phosphorylation of N-acetyl-L-glutamate. This chain is Acetylglutamate kinase, found in Bradyrhizobium sp. (strain BTAi1 / ATCC BAA-1182).